We begin with the raw amino-acid sequence, 425 residues long: Synaptotagmin-4 (425 aa).

Residues 1-16 (MAPITTSREEFDEIPT) lie on the Vesicular side of the membrane. Residues 17–37 (VVGIFSAFGLVFTVSLFAWIC) form a helical membrane-spanning segment. Residues 38 to 425 (CQRKSSKSNK…IAKWHVLCDG (388 aa)) are Cytoplasmic-facing. The segment covering 73–83 (FGADDKNEVKN) has biased composition (basic and acidic residues). 2 disordered regions span residues 73–93 (FGADDKNEVKNKPAVPKNSLH) and 127–147 (LEGEKESVSPESLKSSTSLTS). Phosphoserine; by MAPK8 is present on Ser-135. Residues 135–146 (SPESLKSSTSLT) are compositionally biased toward low complexity. C2 domains follow at residues 153–274 (KLGT…MLMN) and 287–420 (GRGE…AKWH). 3 residues coordinate Ca(2+): Asp-246, Ser-249, and Asp-252.

Belongs to the synaptotagmin family. As to quaternary structure, interacts with KIF1A; the interaction increases in presence of calcium and decreases when SYT4 is phosphorylated at Ser-135. Ca(2+) serves as cofactor. Phosphorylation at Ser-135 by MAPK8/JNK1 reduces interaction with KIF1A and neuronal dense core vesicles mobility. As to expression, expressed in melanocytes. Expressed in brain. Within brain, expression is highest in hippocampus, with substantial levels also detected in amygdala and thalamus.

It localises to the cytoplasmic vesicle. Its subcellular location is the secretory vesicle. The protein localises to the neuronal dense core vesicle membrane. Synaptotagmin family member which does not bind Ca(2+). Involved in neuronal dense core vesicles (DCVs) mobility through its interaction with KIF1A. Upon increased neuronal activity, phosphorylation by MAPK8/JNK1 destabilizes the interaction with KIF1A and captures DCVs to synapses. Plays a role in dendrite formation by melanocytes. The protein is Synaptotagmin-4 (SYT4) of Homo sapiens (Human).